A 1114-amino-acid chain; its full sequence is Kinesin-like protein KIN-12B (1114 aa).

The disordered stretch occupies residues 1-119 (MRSLFSSKLS…GGGGGDSGVQ (119 aa)). The span at 98–107 (SAASPAPEGA) shows a compositional bias: low complexity. A Kinesin motor domain is found at 117–459 (GVQVVVRVRP…LRFAHRAKDI (343 aa)). 197 to 204 (GQTGSGKT) is an ATP binding site. Coiled-coil stretches lie at residues 772-810 (VLSAKIELERIQEELERYRNFKDEKEVLLEEIQHLKNQL) and 999-1043 (ELLV…DQEV). The span at 1055-1065 (LPSNVVQSPEP) shows a compositional bias: polar residues. A disordered region spans residues 1055–1081 (LPSNVVQSPEPSETGPARYDTGGSFGD).

This sequence belongs to the TRAFAC class myosin-kinesin ATPase superfamily. Kinesin family. KIN-12 subfamily.

In Oryza sativa subsp. japonica (Rice), this protein is Kinesin-like protein KIN-12B.